The sequence spans 1516 residues: UDP-glucose:glycoprotein glucosyltransferase 2 (1516 aa).

A signal peptide spans 1–27 (MAPAKATNVVRLLLGSTALWLSQLGSG). 4 N-linked (GlcNAc...) asparagine glycosylation sites follow: Asn256, Asn286, Asn920, and Asn950. Residues 1220–1516 (LHKENKKEKD…QDTILTHDEL (297 aa)) form a glucosyltransferase region. Tyr1289 bears the Phosphotyrosine mark. The Prevents secretion from ER motif lies at 1513 to 1516 (HDEL).

It belongs to the glycosyltransferase 8 family. In terms of assembly, interacts with METTL23. Interacts with SELENOF. Requires Ca(2+) as cofactor. It depends on Mn(2+) as a cofactor. As to expression, higher levels in kidney, pancreas, heart, and skeletal muscle.

The protein localises to the endoplasmic reticulum lumen. Its subcellular location is the endoplasmic reticulum-Golgi intermediate compartment. It catalyses the reaction N(4)-(alpha-D-Man-(1-&gt;2)-alpha-D-Man-(1-&gt;2)-alpha-D-Man-(1-&gt;3)-[alpha-D-Man-(1-&gt;2)-alpha-D-Man-(1-&gt;3)-[alpha-D-Man-(1-&gt;2)-alpha-D-Man-(1-&gt;6)]-alpha-D-Man-(1-&gt;6)]-beta-D-Man-(1-&gt;4)-beta-D-GlcNAc-(1-&gt;4)-beta-D-GlcNAc)-L-asparaginyl-[protein] (N-glucan mannose isomer 9A1,2,3B1,2,3) + UDP-alpha-D-glucose = N(4)-(alpha-D-Glc-(1-&gt;3)-alpha-D-Man-(1-&gt;2)-alpha-D-Man-(1-&gt;2)-alpha-D-Man-(1-&gt;3)-[alpha-D-Man-(1-&gt;2)-alpha-D-Man-(1-&gt;3)-[alpha-D-Man-(1-&gt;2)-alpha-D-Man-(1-&gt;6)]-alpha-D-Man-(1-&gt;6)]-beta-D-Man-(1-&gt;4)-beta-D-GlcNAc-(1-&gt;4)-beta-D-GlcNAc)-L-asparaginyl-[protein] + UDP + H(+). The protein operates within protein modification; protein glycosylation. Its activity is regulated as follows. Ethylenediaminetetraacetic acid completely abolishes catalytic activity. Catalytic activity is enhanced by complex formation with SELENOF. Its function is as follows. Recognizes glycoproteins with minor folding defects. Reglucosylates single N-glycans near the misfolded part of the protein, thus providing quality control for protein folding in the endoplasmic reticulum. Reglucosylated proteins are recognized by calreticulin for recycling to the endoplasmic reticulum and refolding or degradation. The polypeptide is UDP-glucose:glycoprotein glucosyltransferase 2 (UGGT2) (Homo sapiens (Human)).